The primary structure comprises 195 residues: ATP-dependent Clp protease proteolytic subunit (195 aa).

The active-site Nucleophile is serine 98. The active site involves histidine 123.

This sequence belongs to the peptidase S14 family. As to quaternary structure, fourteen ClpP subunits assemble into 2 heptameric rings which stack back to back to give a disk-like structure with a central cavity, resembling the structure of eukaryotic proteasomes.

It is found in the cytoplasm. The catalysed reaction is Hydrolysis of proteins to small peptides in the presence of ATP and magnesium. alpha-casein is the usual test substrate. In the absence of ATP, only oligopeptides shorter than five residues are hydrolyzed (such as succinyl-Leu-Tyr-|-NHMec, and Leu-Tyr-Leu-|-Tyr-Trp, in which cleavage of the -Tyr-|-Leu- and -Tyr-|-Trp bonds also occurs).. In terms of biological role, cleaves peptides in various proteins in a process that requires ATP hydrolysis. Has a chymotrypsin-like activity. Plays a major role in the degradation of misfolded proteins. The polypeptide is ATP-dependent Clp protease proteolytic subunit (Sulfurovum sp. (strain NBC37-1)).